The chain runs to 704 residues: Protein kinase C-like 1 (704 aa).

Residues T89 and T139 each carry the phosphothreonine; by autocatalysis modification. 2 consecutive Phorbol-ester/DAG-type zinc fingers follow at residues 165–215 and 237–287; these read GHQF…IMQC and PHRF…SNLC. T324 bears the Phosphothreonine; by autocatalysis mark. Residues 375–634 enclose the Protein kinase domain; sequence FNLLKVLGKG…DGPIRQHCFF (260 aa). ATP is bound by residues 381–389 and K404; that span reads LGKGSFGKV. Catalysis depends on D499, which acts as the Proton acceptor. The 70-residue stretch at 635-704 folds into the AGC-kinase C-terminal domain; that stretch reads RGVDWKRFEN…FSYTNPHFSK (70 aa).

This sequence belongs to the protein kinase superfamily. AGC Ser/Thr protein kinase family. PKC subfamily.

The catalysed reaction is L-seryl-[protein] + ATP = O-phospho-L-seryl-[protein] + ADP + H(+). The enzyme catalyses L-threonyl-[protein] + ATP = O-phospho-L-threonyl-[protein] + ADP + H(+). In terms of biological role, diacylglycerol (DAG)-dependent serine/threonine-protein kinase that phosphorylates a range of cellular proteins. Phosphorylates mlk-1, a component of the JNK pathway. Involved in axon regeneration after injury probably by activating the JNK pathway. Plays a role in resistance to fungal infection and in wound healing by promoting expression of antimicrobial peptide nlp-29 in the epidermis downstream of gpa-12 and plc-3 and upstream of tir-1-p38-like pathway. Probably by regulating neuronal transmission in ALA neurons, regulates the decrease in pharyngeal pumping during the quiescent state that precedes each larval molt, downstream of lin-3 and receptor let-23 and phospholipase plc-3. In Caenorhabditis elegans, this protein is Protein kinase C-like 1 (tpa-1).